The following is a 939-amino-acid chain: Isoleucine--tRNA ligase (939 aa).

The 'HIGH' region motif lies at 57-67 (PYANGEIHIGH). Glu563 serves as a coordination point for L-isoleucyl-5'-AMP. The 'KMSKS' region signature appears at 604 to 608 (KMSKS). Lys607 is a binding site for ATP. The Zn(2+) site is built by Cys902, Cys905, Cys922, and Cys925.

It belongs to the class-I aminoacyl-tRNA synthetase family. IleS type 1 subfamily. Monomer. The cofactor is Zn(2+).

The protein resides in the cytoplasm. It carries out the reaction tRNA(Ile) + L-isoleucine + ATP = L-isoleucyl-tRNA(Ile) + AMP + diphosphate. Functionally, catalyzes the attachment of isoleucine to tRNA(Ile). As IleRS can inadvertently accommodate and process structurally similar amino acids such as valine, to avoid such errors it has two additional distinct tRNA(Ile)-dependent editing activities. One activity is designated as 'pretransfer' editing and involves the hydrolysis of activated Val-AMP. The other activity is designated 'posttransfer' editing and involves deacylation of mischarged Val-tRNA(Ile). In Methylococcus capsulatus (strain ATCC 33009 / NCIMB 11132 / Bath), this protein is Isoleucine--tRNA ligase.